Reading from the N-terminus, the 406-residue chain is MKTASIITVGSEIIEGIILNTNEKYICYKLTEAGLKVIRTISVDDDIESIKNAVNYSLNDSDVIVLSGGLGPTEDDKTREAIAESLKLKIALNEELKKAIEKRISKYHRYVPSNIAKQAMVIENAKILENHVGSAPGQLVFHKGKILVLLPGPPQELEPMLNNALNEIKPQPDLSTLSMLFFSIPEAELDEIITSIVHDTSVKIATQASYFDGVRVRLSAPKAKAEELTKLSKKIIELTGEKFIGYGNITLEEAVIKLLKKKHQTLSIAESCTGGMISSRLVNIPGASEVFLGAIVAYNNSVKRNILNVSNKILEKYGAVSQQCVAEMAEGVRKIMKSDLALAVSGIAGPTGGSEKKPVGTVYFCIAGESIKDIQRLFYPQQRNVFRSRVSAYGLYLILKCLSNML.

The protein belongs to the CinA family.

The sequence is that of CinA-like protein from Pseudothermotoga lettingae (strain ATCC BAA-301 / DSM 14385 / NBRC 107922 / TMO) (Thermotoga lettingae).